A 300-amino-acid polypeptide reads, in one-letter code: N-acetylmuramic acid 6-phosphate etherase (300 aa).

The SIS domain maps to I57–K220. The active-site Proton donor is the E85. E116 is a catalytic residue.

The protein belongs to the GCKR-like family. MurNAc-6-P etherase subfamily. As to quaternary structure, homodimer.

It carries out the reaction N-acetyl-D-muramate 6-phosphate + H2O = N-acetyl-D-glucosamine 6-phosphate + (R)-lactate. It participates in amino-sugar metabolism; 1,6-anhydro-N-acetylmuramate degradation. Its pathway is amino-sugar metabolism; N-acetylmuramate degradation. The protein operates within cell wall biogenesis; peptidoglycan recycling. Its function is as follows. Specifically catalyzes the cleavage of the D-lactyl ether substituent of MurNAc 6-phosphate, producing GlcNAc 6-phosphate and D-lactate. Together with AnmK, is also required for the utilization of anhydro-N-acetylmuramic acid (anhMurNAc) either imported from the medium or derived from its own cell wall murein, and thus plays a role in cell wall recycling. This Aliivibrio salmonicida (strain LFI1238) (Vibrio salmonicida (strain LFI1238)) protein is N-acetylmuramic acid 6-phosphate etherase.